The sequence spans 388 residues: Putative F-box protein At3g49520 (388 aa).

The region spanning 1-47 (MTTISDLPYDLVKEIFSWVPFTSLRAVRSTCKTWNALSKNQIFGKKS) is the F-box domain.

The sequence is that of Putative F-box protein At3g49520 from Arabidopsis thaliana (Mouse-ear cress).